Here is a 304-residue protein sequence, read N- to C-terminus: UDP-3-O-acyl-N-acetylglucosamine deacetylase (304 aa).

Zn(2+) contacts are provided by histidine 78, histidine 237, and aspartate 241. The active-site Proton donor is histidine 264.

Belongs to the LpxC family. It depends on Zn(2+) as a cofactor.

It catalyses the reaction a UDP-3-O-[(3R)-3-hydroxyacyl]-N-acetyl-alpha-D-glucosamine + H2O = a UDP-3-O-[(3R)-3-hydroxyacyl]-alpha-D-glucosamine + acetate. Its pathway is glycolipid biosynthesis; lipid IV(A) biosynthesis; lipid IV(A) from (3R)-3-hydroxytetradecanoyl-[acyl-carrier-protein] and UDP-N-acetyl-alpha-D-glucosamine: step 2/6. In terms of biological role, catalyzes the hydrolysis of UDP-3-O-myristoyl-N-acetylglucosamine to form UDP-3-O-myristoylglucosamine and acetate, the committed step in lipid A biosynthesis. The sequence is that of UDP-3-O-acyl-N-acetylglucosamine deacetylase from Alcanivorax borkumensis (strain ATCC 700651 / DSM 11573 / NCIMB 13689 / SK2).